A 354-amino-acid chain; its full sequence is Kelch domain-containing protein 8B (354 aa).

8 Kelch repeats span residues 1 to 31, 32 to 79, 81 to 127, 128 to 175, 176 to 222, 224 to 281, 282 to 329, and 331 to 354; these read MSAG…HQDE, HLLV…VLGK, VLVV…ERDG, MVYA…LHGN, KIYV…MAEG, VFSL…SLGG, HIVA…QAGP, and LFVI…RDGV.

It localises to the cytoplasm. It is found in the midbody. In terms of biological role, involved in pinching off the separated nuclei at the cleavage furrow and in cytokinesis. Required for mitotic integrity and maintenance of chromosomal stability. Protects cells against mitotic errors, centrosomal amplification, micronucleus formation and aneuploidy. Plays a key role of midbody function involving abscission of the daughter cells during cytokinesis and appropriate chromosomal and nuclear segregation into the daughter cells. This is Kelch domain-containing protein 8B (KLHDC8B) from Pongo abelii (Sumatran orangutan).